The sequence spans 209 residues: Uracil phosphoribosyltransferase (209 aa).

Residues R79, R104, and 131-139 (DPMLATGGS) each bind 5-phospho-alpha-D-ribose 1-diphosphate. Residues I194 and 199-201 (GDA) contribute to the uracil site. D200 provides a ligand contact to 5-phospho-alpha-D-ribose 1-diphosphate.

Belongs to the UPRTase family. The cofactor is Mg(2+).

It catalyses the reaction UMP + diphosphate = 5-phospho-alpha-D-ribose 1-diphosphate + uracil. It participates in pyrimidine metabolism; UMP biosynthesis via salvage pathway; UMP from uracil: step 1/1. Its activity is regulated as follows. Allosterically activated by GTP. Catalyzes the conversion of uracil and 5-phospho-alpha-D-ribose 1-diphosphate (PRPP) to UMP and diphosphate. This chain is Uracil phosphoribosyltransferase, found in Geobacillus sp. (strain WCH70).